A 1122-amino-acid chain; its full sequence is Midnolin homolog (1122 aa).

One can recognise a Ubiquitin-like domain in the interval 69-143 (INLNISTTTG…IILIPNVETG (75 aa)). A required for interaction with Pc region spans residues 210 to 300 (GGASGSSINA…SGQRSSGRIG (91 aa)). Disordered regions lie at residues 257 to 399 (VGGS…STLN), 596 to 630 (KHRH…HFFN), 645 to 677 (FATS…GAGA), 746 to 775 (GVVS…KSGS), 840 to 876 (APTT…RSKM), 886 to 905 (KCNS…ASGS), 922 to 955 (AATK…NGCT), and 1067 to 1122 (AAPA…DTAA). Residues 266-298 (SGTSSSSSSTSSSSSSSSSSSRTRSSGQRSSGR) are compositionally biased toward low complexity. Basic residues-rich tracts occupy residues 300 to 310 (GHGHVHSHQHP) and 321 to 352 (SHGH…HHHN). The segment covering 375-397 (PSSSGASGSAPATGTGQSQSSST) has biased composition (low complexity). Over residues 596 to 610 (KHRHYHGQGHGHGHG) the composition is skewed to basic residues. Low complexity-rich tracts occupy residues 612–627 (GHSS…SSSH), 648–663 (SSSS…SSSP), 746–766 (GVVS…AASG), 856–867 (SGSSSTTSSGSG), 889–903 (SRAQ…TLAS), and 922–936 (AATK…SSHS). Composition is skewed to polar residues over residues 937-954 (CCQT…SNGC) and 1071-1085 (NSIT…VNGN). Positions 1086–1107 (TSTAPATAATSAAAAPTAAPPS) are enriched in low complexity.

Interacts with PRC1 complex member polycomb protein Pc; the interaction targets Pc for ubiquitin-independent proteasomal degradation. Does not interact with PRC1 members Ph, Psc or Sce so does not appear to be a member of the PRC1 complex. Interacts with 26S proteasome regulatory subunit Rpn10.

The protein localises to the nucleus. Facilitates ubiquitin-independent proteasomal degradation of polycomb protein Pc by interacting directly with the proteasome and recruiting Pc to it. This Drosophila melanogaster (Fruit fly) protein is Midnolin homolog.